Consider the following 885-residue polypeptide: Leucine--tRNA ligase (885 aa).

Residues 48–58 (PYPSGKLHMGH) carry the 'HIGH' region motif. Residues 639–643 (TMSKS) carry the 'KMSKS' region motif. Lysine 642 lines the ATP pocket.

Belongs to the class-I aminoacyl-tRNA synthetase family.

The protein localises to the cytoplasm. The catalysed reaction is tRNA(Leu) + L-leucine + ATP = L-leucyl-tRNA(Leu) + AMP + diphosphate. The polypeptide is Leucine--tRNA ligase (Bordetella pertussis (strain Tohama I / ATCC BAA-589 / NCTC 13251)).